A 384-amino-acid polypeptide reads, in one-letter code: Mannitol-1-phosphate 5-dehydrogenase (384 aa).

3–14 (AVHFGAGNIGRG) contributes to the NAD(+) binding site.

This sequence belongs to the mannitol dehydrogenase family.

It catalyses the reaction D-mannitol 1-phosphate + NAD(+) = beta-D-fructose 6-phosphate + NADH + H(+). This chain is Mannitol-1-phosphate 5-dehydrogenase, found in Arthrobacter sp. (strain FB24).